Here is a 637-residue protein sequence, read N- to C-terminus: MTSSNSTVPDSRSETKKFLVLLLGSIGVVYGDIGTSPLYAFRESLRPFTANGVQHEHVVGLISLMIWTLTIIVTFKYVLFLLRADNDGEGGTLSLLALLMKKTGSYMPVLFFAGLIGSALFIGDAMITPALSVMSALEGMKLVTPAFSDYVLPLSALIMVGLFAVQSKGTGAVAVFFGPITVVWFLAMAWGGLIHIGDDWTILEAVNPINALWFITHAGWAGLIVLGAVFLTVTGAEALYADLGHFGRKPISVAWFILVFPALALNYLGQGALVLSNPAAIENPFYLLYPEWALFPMIILATMATVIASQAVITGAFSLARQAVHLGFLPKLMIRFTSETNTGQIYVPAVNMVLFIGVLVLIFSFGDSESLATAYGISVTGAMVVTTLMAFQFLRSIRGKSAFTAAILLAPLFSIEAVFLAANLLKVHDGGWVPLALAGVIILVMWTWTKGSRYLREKISKNDVSLDTFITSLERSISRESRSAPVLVSGTAVFLTSVPDKAPSVLLHNLKHNHVLHEQNVILTIWTHDKPYVADTDRVEITRISKHFMRLDINFGFMDDPNVVKALPLCKKKGFKFEIMQTSFYLGRRNLIATPNTGLPRWQEDLYIALADFGVDPSAYFKLPPNRVIEIGEQVAI.

12 helical membrane passes run 18 to 38, 61 to 81, 107 to 127, 145 to 165, 174 to 194, 211 to 231, 255 to 275, 293 to 313, 345 to 365, 371 to 391, 402 to 422, and 429 to 449; these read FLVL…TSPL, LISL…VLFL, MPVL…DAMI, PAFS…LFAV, AVFF…GGLI, ALWF…AVFL, WFIL…ALVL, ALFP…QAVI, IYVP…IFSF, LATA…LMAF, AFTA…FLAA, and DGGW…WTWT.

It belongs to the HAK/KUP transporter (TC 2.A.72) family.

It localises to the cell inner membrane. It catalyses the reaction K(+)(in) + H(+)(in) = K(+)(out) + H(+)(out). Transport of potassium into the cell. Likely operates as a K(+):H(+) symporter. This is Probable potassium transport system protein Kup 2 from Agrobacterium fabrum (strain C58 / ATCC 33970) (Agrobacterium tumefaciens (strain C58)).